We begin with the raw amino-acid sequence, 466 residues long: ATP-dependent protease ATPase subunit HslU (466 aa).

Residues Ile18, 60-65 (GVGKTE), Asp279, Glu344, and Arg416 contribute to the ATP site.

This sequence belongs to the ClpX chaperone family. HslU subfamily. A double ring-shaped homohexamer of HslV is capped on each side by a ring-shaped HslU homohexamer. The assembly of the HslU/HslV complex is dependent on binding of ATP.

The protein resides in the cytoplasm. Its function is as follows. ATPase subunit of a proteasome-like degradation complex; this subunit has chaperone activity. The binding of ATP and its subsequent hydrolysis by HslU are essential for unfolding of protein substrates subsequently hydrolyzed by HslV. HslU recognizes the N-terminal part of its protein substrates and unfolds these before they are guided to HslV for hydrolysis. This chain is ATP-dependent protease ATPase subunit HslU, found in Syntrophomonas wolfei subsp. wolfei (strain DSM 2245B / Goettingen).